Consider the following 421-residue polypeptide: Alpha-1-antitrypsin (421 aa).

A signal peptide spans 1–24; the sequence is MASSSTWGLLLLAGLCCLVPISLA. N-linked (GlcNAc...) asparagine glycosylation is found at asparagine 73 and asparagine 110. The tract at residues 376–395 is RCL; that stretch reads GATILEAIPMSIPPNVKFNK. Serine 386 bears the Phosphoserine mark.

The protein belongs to the serpin family. As to quaternary structure, interacts with CELA2A. Interacts with ERGIC3 and LMAN1/ERGIC53. Interacts with PRSS1/Trypsin.

It is found in the secreted. Its function is as follows. Inhibitor of serine proteases. Its primary target is elastase, but it also has a moderate affinity for plasmin and thrombin. This Sus scrofa (Pig) protein is Alpha-1-antitrypsin (SERPINA1).